Reading from the N-terminus, the 195-residue chain is Der GTPase-activating protein YihI (195 aa).

The segment at 1–81 (MSRTKKTRRI…KAVVKEVKDP (81 aa)) is disordered. Composition is skewed to basic and acidic residues over residues 9–23 (RITDIMPARKTDKPK), 38–49 (TRYELDAQAREE), and 66–81 (DPAEQKKAVVKEVKDP).

Belongs to the YihI family. As to quaternary structure, interacts with Der.

In terms of biological role, a GTPase-activating protein (GAP) that modifies Der/EngA GTPase function. May play a role in ribosome biogenesis. The polypeptide is Der GTPase-activating protein YihI (Mannheimia haemolytica (Pasteurella haemolytica)).